Reading from the N-terminus, the 341-residue chain is Thiamine-phosphate synthase (341 aa).

The tract at residues 1 to 123 (MAVVEEQVVL…AAAAKEWRYR (123 aa)) is unknown. Residues 61-80 (AARDTPHDPGTGLEHPDEGV) form a disordered region. The tract at residues 124 to 341 (VYTLESTATG…AWFLERLNRG (218 aa)) is thiamine-phosphate synthase. Residues 171 to 175 (QLREK) and asparagine 203 each bind 4-amino-2-methyl-5-(diphosphooxymethyl)pyrimidine. Mg(2+)-binding residues include aspartate 204 and aspartate 223. Serine 242 is a binding site for 4-amino-2-methyl-5-(diphosphooxymethyl)pyrimidine. 268–270 (TPT) is a binding site for 2-[(2R,5Z)-2-carboxy-4-methylthiazol-5(2H)-ylidene]ethyl phosphate. Lysine 271 contacts 4-amino-2-methyl-5-(diphosphooxymethyl)pyrimidine. Glycine 298 contributes to the 2-[(2R,5Z)-2-carboxy-4-methylthiazol-5(2H)-ylidene]ethyl phosphate binding site.

It belongs to the thiamine-phosphate synthase family. Mg(2+) serves as cofactor.

The catalysed reaction is 2-[(2R,5Z)-2-carboxy-4-methylthiazol-5(2H)-ylidene]ethyl phosphate + 4-amino-2-methyl-5-(diphosphooxymethyl)pyrimidine + 2 H(+) = thiamine phosphate + CO2 + diphosphate. The enzyme catalyses 2-(2-carboxy-4-methylthiazol-5-yl)ethyl phosphate + 4-amino-2-methyl-5-(diphosphooxymethyl)pyrimidine + 2 H(+) = thiamine phosphate + CO2 + diphosphate. It catalyses the reaction 4-methyl-5-(2-phosphooxyethyl)-thiazole + 4-amino-2-methyl-5-(diphosphooxymethyl)pyrimidine + H(+) = thiamine phosphate + diphosphate. The protein operates within cofactor biosynthesis; thiamine diphosphate biosynthesis; thiamine phosphate from 4-amino-2-methyl-5-diphosphomethylpyrimidine and 4-methyl-5-(2-phosphoethyl)-thiazole: step 1/1. Its function is as follows. Condenses 4-methyl-5-(beta-hydroxyethyl)thiazole monophosphate (THZ-P) and 2-methyl-4-amino-5-hydroxymethyl pyrimidine pyrophosphate (HMP-PP) to form thiamine monophosphate (TMP). The protein is Thiamine-phosphate synthase of Gloeobacter violaceus (strain ATCC 29082 / PCC 7421).